The primary structure comprises 494 residues: Glycerol kinase (494 aa).

Thr-12 is a binding site for ADP. Residues Thr-12, Thr-13, and Ser-14 each contribute to the ATP site. Thr-12 serves as a coordination point for sn-glycerol 3-phosphate. An ADP-binding site is contributed by Arg-16. Residues Arg-82, Glu-83, Tyr-135, and Asp-244 each coordinate sn-glycerol 3-phosphate. The glycerol site is built by Arg-82, Glu-83, Tyr-135, Asp-244, and Gln-245. The ADP site is built by Thr-266 and Gly-309. The ATP site is built by Thr-266, Gly-309, Gln-313, and Gly-409. The ADP site is built by Gly-409 and Asn-413.

It belongs to the FGGY kinase family.

The enzyme catalyses glycerol + ATP = sn-glycerol 3-phosphate + ADP + H(+). It functions in the pathway polyol metabolism; glycerol degradation via glycerol kinase pathway; sn-glycerol 3-phosphate from glycerol: step 1/1. Its activity is regulated as follows. Inhibited by fructose 1,6-bisphosphate (FBP). Functionally, key enzyme in the regulation of glycerol uptake and metabolism. Catalyzes the phosphorylation of glycerol to yield sn-glycerol 3-phosphate. The chain is Glycerol kinase from Alteromonas mediterranea (strain DSM 17117 / CIP 110805 / LMG 28347 / Deep ecotype).